We begin with the raw amino-acid sequence, 105 residues long: Ig lambda chain C region (105 aa).

Residues 2–100 (PKAAPTVNLF…EGTIVEKTVT (99 aa)) form the Ig-like domain. Cys27 and Cys86 are disulfide-bonded.

The polypeptide is Ig lambda chain C region (Sus scrofa (Pig)).